We begin with the raw amino-acid sequence, 1012 residues long: MGSGGTGLLGTEWPLPLLLLFIMGGEALDSPPQILVHPQDQLLQGSGPAKMRCRSSGQPPPTIRWLLNGQPLSMATPDLHYLLPDGTLLLHRPSVQGRPQDDQNILSAILGVYTCEASNRLGTAVSRGARLSVAVLQEDFQIQPRDTVAVVGESLVLECGPPWGYPKPSVSWWKDGKPLVLQPGRRTVSGDSLMVSRAEKNDSGTYMCMATNNAGQRESRAARVSIQESQDHKEHLELLAVRIQLENVTLLNPEPVKGPKPGPSVWLSWKVSGPAAPAESYTALFRTQRSPRDQGSPWTEVLLRGLQSAKLGGLHWGQDYEFKVRPSSGRARGPDSNVLLLRLPEQVPSAPPQGVTLRSGNGSVFVSWAPPPAESHNGVIRGYQVWSLGNASLPAANWTVVGEQTQLEIATRLPGSYCVQVAAVTGAGAGELSTPVCLLLEQAMEQSARDPRKHVPWTLEQLRATLRRPEVIASSAVLLWLLLLGITVCIYRRRKAGVHLGPGLYRYTSEDAILKHRMDHSDSPWLADTWRSTSGSRDLSSSSSLSSRLGLDPRDPLEGRRSLISWDPRSPGVPLLPDTSTFYGSLIAEQPSSPPVRPSPKTPAARRFPSKLAGTSSPWASSDSLCSRRGLCSPRMSLTPTEAWKAKKKQELHQANSSPLLRGSHPMEIWAWELGSRASKNLSQSPGPNSGSPGEAPRAVVSWRAVGPQLHRNSSELASRPLPPTPLSLRGASSHDPQSQCVEKLQAPSSDPLPAAPLSVLNSSRPSSPQASFLSCPSPSSSNLSSSSLSSLEEEEDQDSVLTPEEVALCLELSDGEETPTNSVSPMPRAPSPPTTYGYISIPTCSGLADMGRAGGGVGSEVGNLLYPPRPCPTPTPSEGSLANGWGSASEDNVPSARASLVSSSDGSFLADTHFARALAVAVDSFGLSLDPREADCVFTDASSPPSPRGDLSLTRSFSLPLWEWRPDWLEDAEISHTQRLGRGLPPWPPDSRASSQRSWLTGAVPKAGDSS.

The signal sequence occupies residues 1 to 27; sequence MGSGGTGLLGTEWPLPLLLLFIMGGEA. Ig-like C2-type domains follow at residues 32–132 and 138–225; these read PQIL…ARLS and EDFQ…ARVS. Intrachain disulfides connect cysteine 53–cysteine 115 and cysteine 159–cysteine 208. Residues asparagine 201 and asparagine 247 are each glycosylated (N-linked (GlcNAc...) asparagine). Fibronectin type-III domains lie at 249–346 and 348–443; these read TLLN…LPEQ and PSAP…LEQA. Residues asparagine 361, asparagine 390, and asparagine 397 are each glycosylated (N-linked (GlcNAc...) asparagine). Disordered regions lie at residues 533 to 553 and 586 to 616; these read TSGS…GLDP and LIAE…AGTS. A compositionally biased stretch (low complexity) spans 534-550; it reads SGSRDLSSSSSLSSRLG. The segment covering 592–601 has biased composition (pro residues); sequence SSPPVRPSPK. 2 N-linked (GlcNAc...) asparagine glycosylation sites follow: asparagine 681 and asparagine 713. The tract at residues 711 to 801 is disordered; that stretch reads HRNSSELASR…LEEEEDQDSV (91 aa). Low complexity predominate over residues 745–759; the sequence is LQAPSSDPLPAAPLS. A compositionally biased stretch (polar residues) spans 760-771; that stretch reads VLNSSRPSSPQA. Residues asparagine 762 and asparagine 783 are each glycosylated (N-linked (GlcNAc...) asparagine). The segment covering 772 to 791 has biased composition (low complexity); the sequence is SFLSCPSPSSSNLSSSSLSS. Phosphoserine is present on residues serine 814 and serine 947. The interval 980-1012 is disordered; it reads RLGRGLPPWPPDSRASSQRSWLTGAVPKAGDSS.

Belongs to the immunoglobulin superfamily. ROBO family. As to quaternary structure, interacts with SLIT2 and ENAH. In terms of tissue distribution, expressed specifically in embryo and adult vascular endothelium.

Receptor for Slit proteins, at least for SLIT2, and seems to be involved in angiogenesis and vascular patterning. May mediate the inhibition of primary endothelial cell migration by Slit proteins. Involved in the maintenance of endothelial barrier organization and function. The sequence is that of Roundabout homolog 4 (Robo4) from Mus musculus (Mouse).